The following is a 409-amino-acid chain: Serine/threonine transporter SstT (409 aa).

The next 9 helical transmembrane spans lie at 17–37, 49–69, 83–103, 142–162, 180–200, 218–238, 301–321, 331–351, and 357–377; these read LVGQIIVGLIAGLLLASFFPA, FVSALKAVAPVLVFVLVMASI, ILLLYLVGTFSAAVVAVIASF, ALISANFIGILAWAIGLGIAF, VSLIVKVVIRFAPLGIFGLVA, LVVLLGCMLFVAFVVNPLIVF, GAAITITVLTLAAVHTLGIAV, VVASICACGASGVAGGSLLLI, and LFGIPSEVAMQVVAVGFIIAI.

It belongs to the dicarboxylate/amino acid:cation symporter (DAACS) (TC 2.A.23) family.

It is found in the cell inner membrane. The enzyme catalyses L-serine(in) + Na(+)(in) = L-serine(out) + Na(+)(out). The catalysed reaction is L-threonine(in) + Na(+)(in) = L-threonine(out) + Na(+)(out). Involved in the import of serine and threonine into the cell, with the concomitant import of sodium (symport system). The polypeptide is Serine/threonine transporter SstT (Pseudomonas aeruginosa (strain LESB58)).